We begin with the raw amino-acid sequence, 185 residues long: Ribosome-recycling factor (185 aa).

The protein belongs to the RRF family.

Its subcellular location is the cytoplasm. Functionally, responsible for the release of ribosomes from messenger RNA at the termination of protein biosynthesis. May increase the efficiency of translation by recycling ribosomes from one round of translation to another. This chain is Ribosome-recycling factor, found in Streptococcus thermophilus (strain CNRZ 1066).